The chain runs to 294 residues: 33 kDa chaperonin (294 aa).

2 disulfide bridges follow: C235-C237 and C268-C271.

It belongs to the HSP33 family. In terms of processing, under oxidizing conditions two disulfide bonds are formed involving the reactive cysteines. Under reducing conditions zinc is bound to the reactive cysteines and the protein is inactive.

It is found in the cytoplasm. Functionally, redox regulated molecular chaperone. Protects both thermally unfolding and oxidatively damaged proteins from irreversible aggregation. Plays an important role in the bacterial defense system toward oxidative stress. The chain is 33 kDa chaperonin from Proteus mirabilis (strain HI4320).